The chain runs to 353 residues: Chloroplastic lipocalin (353 aa).

The segment covering 1 to 18 (MILLSSSISLSRPVSSQS) has biased composition (low complexity). Positions 1–27 (MILLSSSISLSRPVSSQSFSPPAATST) are disordered. The transit peptide at 1-39 (MILLSSSISLSRPVSSQSFSPPAATSTRRSHSSVTVKCC) directs the protein to the chloroplast. Cys163 and Cys299 are oxidised to a cystine.

This sequence belongs to the calycin superfamily. Lipocalin family. As to expression, expressed in leaves at low levels (at protein levels). Present in seeds.

It localises to the plastid. Its subcellular location is the chloroplast thylakoid lumen. Its function is as follows. Lipocalin that prevents thylakoidal membrane lipids peroxidation and confers protection against oxidative stress, especially mediated by singlet oxygen in response to high light and other stress (e.g. heat shocks). Required for seed longevity by ensuring polyunsaturated lipids integrity. The protein is Chloroplastic lipocalin of Arabidopsis thaliana (Mouse-ear cress).